The following is a 214-amino-acid chain: NADH-quinone oxidoreductase subunit C (214 aa).

It belongs to the complex I 30 kDa subunit family. NDH-1 is composed of 14 different subunits. Subunits NuoB, C, D, E, F, and G constitute the peripheral sector of the complex.

It is found in the cell inner membrane. The catalysed reaction is a quinone + NADH + 5 H(+)(in) = a quinol + NAD(+) + 4 H(+)(out). Its function is as follows. NDH-1 shuttles electrons from NADH, via FMN and iron-sulfur (Fe-S) centers, to quinones in the respiratory chain. The immediate electron acceptor for the enzyme in this species is believed to be ubiquinone. Couples the redox reaction to proton translocation (for every two electrons transferred, four hydrogen ions are translocated across the cytoplasmic membrane), and thus conserves the redox energy in a proton gradient. The chain is NADH-quinone oxidoreductase subunit C from Francisella tularensis subsp. tularensis (strain WY96-3418).